The following is a 285-amino-acid chain: Probable ribosomal RNA small subunit methyltransferase A (285 aa).

The S-adenosyl-L-methionine site is built by His29, Leu31, Gly58, Glu79, Asp107, and Asn122.

The protein belongs to the class I-like SAM-binding methyltransferase superfamily. rRNA adenine N(6)-methyltransferase family. RsmA subfamily.

The protein resides in the cytoplasm. Functionally, specifically dimethylates two adjacent adenosines in the loop of a conserved hairpin near the 3'-end of 16S rRNA in the 30S particle. May play a critical role in biogenesis of 30S subunits. This chain is Probable ribosomal RNA small subunit methyltransferase A, found in Haloarcula marismortui (strain ATCC 43049 / DSM 3752 / JCM 8966 / VKM B-1809) (Halobacterium marismortui).